Consider the following 398-residue polypeptide: Chalcone synthase (398 aa).

The active site involves Cys-169.

This sequence belongs to the thiolase-like superfamily. Chalcone/stilbene synthases family.

The enzyme catalyses (E)-4-coumaroyl-CoA + 3 malonyl-CoA + 3 H(+) = 2',4,4',6'-tetrahydroxychalcone + 3 CO2 + 4 CoA. The protein operates within secondary metabolite biosynthesis; flavonoid biosynthesis. In terms of biological role, the primary product of this enzyme is 4,2',4',6'-tetrahydroxychalcone (also termed naringenin-chalcone or chalcone) which can under specific conditions spontaneously isomerize into naringenin. The chain is Chalcone synthase (CHS) from Petroselinum crispum (Parsley).